The chain runs to 366 residues: Terpene cyclase-like protein flvF (366 aa).

This sequence belongs to the terpene synthase family. Homodimer.

The enzyme catalyses N,N-dimethyl-cadaverine + 2,6,9-trimethyl-13-oxatetracyclo[6.3.1.1(6,9).0(1,5)]tridecane carbocation = pre-flavunoidine + H(+). It functions in the pathway secondary metabolite biosynthesis; terpenoid biosynthesis. Terpene cyclase-like protein; part of the gene cluster that mediates the biosynthesis of flavunoidine, an alkaloidal terpenoid with a tetracyclic cage-like core connected to dimethylcadaverine via a C-N bond and acylated with 5,5-dimethyl-L-pipecolate. The tetracyclic core is synthesized by the terpene cyclase flvE and the cytochrome P450 monooxygenase flvD. The terpene cyclase flvE catalyzes the cyclization of farnesyl pyrophosphate (FPP) to form (1R,4R,5S)-(+)-acoradiene and the cytochrome P450 monooxygenase flvD is then responsible for oxidative conversion of (1R,4R,5S)-(+)-acoradiene into the tetracyclic cage present in the final product flavunoidine. In parallel, the N-methyltransferase flvH dimethylates L-lysine to give N,N-dimethyl-L-Lysin which is decarboxylated by flvG to afford dimethylcadaverine. The terpene cyclase-like protein flvF is the enzyme that attaches the dimethylcadaverine precusor at the C-7 of the tetracyclic cage to yield pre-flavunoidine. The cytochrome monooxygenase flvC hydroxylates the C-10 position of pre-flavunoidine whereas the NRPS flvI acylates the terpenoid core at the hydroxylated C-10 with dimethylpipecolate to yield final flavunoidine. The bifunctional enzyme flvA and the dehydrogenase flvB are responsible for the synthesis of the dimethylpipecolate precursor. The PLP-dependent lyase domain of flvA might use L-O-acetyl-homoserine and alpha-keto-isovalerate to form an intermediary ketone that can cyclize intramolecularly to yield an imine. The imine can be reduced by flvB to yield the 6-carboxylated pipecolate. The C-terminal alpha-KG-dependent oxygenase domain of flvA is then proposed to catalyze the decarboxylation to yield dimethylpipecolate. The protein is Terpene cyclase-like protein flvF of Aspergillus flavus (strain ATCC 200026 / FGSC A1120 / IAM 13836 / NRRL 3357 / JCM 12722 / SRRC 167).